Here is a 120-residue protein sequence, read N- to C-terminus: Immunoglobulin kappa variable 2-30 (120 aa).

An N-terminal signal peptide occupies residues 1–20; it reads MRLPAQLLGLLMLWVPGSSG. The interval 21-43 is framework-1; it reads DVVMTQSPLSLPVTLGQPASISC. The region spanning 21-120 is the Ig-like domain; sequence DVVMTQSPLS…YYCMQGTHWP (100 aa). Cys-43 and Cys-113 form a disulfide bridge. Residues 44–59 are complementarity-determining-1; that stretch reads RSSQSLVYSDGNTYLN. The interval 60 to 74 is framework-2; it reads WFQQRPGQSPRRLIY. A complementarity-determining-2 region spans residues 75–81; the sequence is KVSNRDS. Positions 82–113 are framework-3; sequence GVPDRFSGSGSGTDFTLKISRVEAEDVGVYYC. The complementarity-determining-3 stretch occupies residues 114–120; sequence MQGTHWP.

As to quaternary structure, immunoglobulins are composed of two identical heavy chains and two identical light chains; disulfide-linked.

The protein localises to the secreted. The protein resides in the cell membrane. In terms of biological role, v region of the variable domain of immunoglobulin light chains that participates in the antigen recognition. Immunoglobulins, also known as antibodies, are membrane-bound or secreted glycoproteins produced by B lymphocytes. In the recognition phase of humoral immunity, the membrane-bound immunoglobulins serve as receptors which, upon binding of a specific antigen, trigger the clonal expansion and differentiation of B lymphocytes into immunoglobulins-secreting plasma cells. Secreted immunoglobulins mediate the effector phase of humoral immunity, which results in the elimination of bound antigens. The antigen binding site is formed by the variable domain of one heavy chain, together with that of its associated light chain. Thus, each immunoglobulin has two antigen binding sites with remarkable affinity for a particular antigen. The variable domains are assembled by a process called V-(D)-J rearrangement and can then be subjected to somatic hypermutations which, after exposure to antigen and selection, allow affinity maturation for a particular antigen. The chain is Immunoglobulin kappa variable 2-30 from Homo sapiens (Human).